A 63-amino-acid chain; its full sequence is Large ribosomal subunit protein bL28 (63 aa).

This sequence belongs to the bacterial ribosomal protein bL28 family.

The polypeptide is Large ribosomal subunit protein bL28 (Hydrogenobaculum sp. (strain Y04AAS1)).